The sequence spans 544 residues: Probable protein kinase UbiB (544 aa).

The 379-residue stretch at 123 to 501 (DFDLVPLASA…KRQQATGKFL (379 aa)) folds into the Protein kinase domain. Residues 129–137 (LASASIAQV) and lysine 152 each bind ATP. Residue aspartate 287 is the Proton acceptor of the active site. Transmembrane regions (helical) follow at residues 496-516 (ATGK…AILV) and 519-539 (TYEQ…LFSW).

It belongs to the ABC1 family. UbiB subfamily.

The protein resides in the cell inner membrane. The protein operates within cofactor biosynthesis; ubiquinone biosynthesis [regulation]. Functionally, is probably a protein kinase regulator of UbiI activity which is involved in aerobic coenzyme Q (ubiquinone) biosynthesis. This Vibrio vulnificus (strain CMCP6) protein is Probable protein kinase UbiB.